The chain runs to 407 residues: Tryptophan synthase beta chain (407 aa).

K86 is subject to N6-(pyridoxal phosphate)lysine.

Belongs to the TrpB family. In terms of assembly, tetramer of two alpha and two beta chains. Pyridoxal 5'-phosphate serves as cofactor.

The enzyme catalyses (1S,2R)-1-C-(indol-3-yl)glycerol 3-phosphate + L-serine = D-glyceraldehyde 3-phosphate + L-tryptophan + H2O. It participates in amino-acid biosynthesis; L-tryptophan biosynthesis; L-tryptophan from chorismate: step 5/5. Functionally, the beta subunit is responsible for the synthesis of L-tryptophan from indole and L-serine. The polypeptide is Tryptophan synthase beta chain (Shewanella woodyi (strain ATCC 51908 / MS32)).